The sequence spans 241 residues: Sugar fermentation stimulation protein homolog (241 aa).

Belongs to the SfsA family.

The protein is Sugar fermentation stimulation protein homolog of Halorhodospira halophila (strain DSM 244 / SL1) (Ectothiorhodospira halophila (strain DSM 244 / SL1)).